The sequence spans 376 residues: uncharacterized protein (376 aa).

The protein belongs to the mimivirus R1 family.

This is an uncharacterized protein from Acanthamoeba polyphaga mimivirus (APMV).